The following is a 606-amino-acid chain: Chaperone protein DnaK (606 aa).

T174 carries the phosphothreonine; by autocatalysis modification. A disordered region spans residues Y578–Y606. Residues P583 to D596 are compositionally biased toward gly residues.

It belongs to the heat shock protein 70 family.

Functionally, acts as a chaperone. The sequence is that of Chaperone protein DnaK from Caldicellulosiruptor saccharolyticus (strain ATCC 43494 / DSM 8903 / Tp8T 6331).